The chain runs to 473 residues: Ribulose bisphosphate carboxylase large chain (473 aa).

Positions 116 and 166 each coordinate substrate. The active-site Proton acceptor is Lys168. Residue Lys170 coordinates substrate. The Mg(2+) site is built by Lys194, Asp196, and Glu197. Lys194 bears the N6-carboxylysine mark. His287 (proton acceptor) is an active-site residue. 3 residues coordinate substrate: Arg288, His320, and Ser372.

The protein belongs to the RuBisCO large chain family. Type I subfamily. As to quaternary structure, heterohexadecamer of 8 large chains and 8 small chains. Requires Mg(2+) as cofactor.

The catalysed reaction is 2 (2R)-3-phosphoglycerate + 2 H(+) = D-ribulose 1,5-bisphosphate + CO2 + H2O. It carries out the reaction D-ribulose 1,5-bisphosphate + O2 = 2-phosphoglycolate + (2R)-3-phosphoglycerate + 2 H(+). RuBisCO catalyzes two reactions: the carboxylation of D-ribulose 1,5-bisphosphate, the primary event in carbon dioxide fixation, as well as the oxidative fragmentation of the pentose substrate. Both reactions occur simultaneously and in competition at the same active site. In Nitrosospira sp. (strain TCH716), this protein is Ribulose bisphosphate carboxylase large chain.